We begin with the raw amino-acid sequence, 478 residues long: Aspartate ammonia-lyase (478 aa).

L-aspartate is bound by residues T109, S148, T149, N150, and T195. An SS loop region spans residues 326–335 (GSSIMPGKVN). Residue S327 is the Proton acceptor of the active site. 2 residues coordinate L-aspartate: S328 and K333.

Belongs to the class-II fumarase/aspartase family. Aspartase subfamily. Homotetramer.

It catalyses the reaction L-aspartate = fumarate + NH4(+). In terms of biological role, catalyzes the reversible conversion of L-aspartate to fumarate and ammonia. The sequence is that of Aspartate ammonia-lyase from Pseudomonas fluorescens.